The following is a 722-amino-acid chain: Lysophospholipid acyltransferase 6 (722 aa).

5 helical membrane passes run methionine 25 to leucine 45, leucine 62 to isoleucine 84, isoleucine 104 to methionine 123, alanine 180 to phenylalanine 200, and lysine 243 to valine 263. Catalysis depends on residues asparagine 349 and histidine 381. A run of 3 helical transmembrane segments spans residues alanine 378–valine 398, isoleucine 424–leucine 444, and leucine 452–proline 472. Polar residues-rich tracts occupy residues asparagine 485–alanine 511 and valine 549–proline 570. Disordered stretches follow at residues asparagine 485–alanine 582 and asparagine 650–proline 687.

This sequence belongs to the membrane-bound acyltransferase family.

The protein localises to the endoplasmic reticulum. It is found in the membrane. It catalyses the reaction a 1-acyl-sn-glycero-3-phospho-L-serine + an acyl-CoA = a 1,2-diacyl-sn-glycero-3-phospho-L-serine + CoA. The enzyme catalyses 1-(9Z-octadecenoyl)-sn-glycero-3-phospho-L-serine + (9Z)-hexadecenoyl-CoA = 1-(9Z-octadecenoyl)-2-(9Z-hexadecenoyl)-sn-glycero-3-phospho-L-serine + CoA. It carries out the reaction 1-(9Z-octadecenoyl)-sn-glycero-3-phospho-L-serine + (9Z)-octadecenoyl-CoA = 1,2-di-(9Z)-octadecenoyl-sn-glycero-3-phospho-L-serine + CoA. The catalysed reaction is a 1-acyl-sn-glycero-3-phosphocholine + an acyl-CoA = a 1,2-diacyl-sn-glycero-3-phosphocholine + CoA. It catalyses the reaction 1-hexadecanoyl-sn-glycero-3-phosphocholine + (9Z)-octadecenoyl-CoA = 1-hexadecanoyl-2-(9Z-octadecenoyl)-sn-glycero-3-phosphocholine + CoA. The enzyme catalyses (9Z)-hexadecenoyl-CoA + 1-hexadecanoyl-sn-glycero-3-phosphocholine = 1-hexadecanoyl-2-(9Z-hexadecenoyl)-sn-glycero-3-phosphocholine + CoA. It carries out the reaction a 1-acyl-sn-glycero-3-phosphoethanolamine + an acyl-CoA = a 1,2-diacyl-sn-glycero-3-phosphoethanolamine + CoA. The catalysed reaction is 1-hexadecanoyl-sn-glycero-3-phosphoethanolamine + (9Z)-octadecenoyl-CoA = 1-hexadecanoyl-2-(9Z-octadecenoyl)-sn-glycero-3-phosphoethanolamine + CoA. It catalyses the reaction 1-hexadecanoyl-sn-glycero-3-phosphoethanolamine + (9Z,12Z)-octadecadienoyl-CoA = 1-hexadecanoyl-2-(9Z,12Z-octadecadienoyl)-sn-glycero-3-phosphoethanolamine + CoA. The enzyme catalyses 1-hexadecanoyl-sn-glycero-3-phosphoethanolamine + (9Z)-hexadecenoyl-CoA = 1-hexadecanoyl-2-(9Z)-hexadecenoyl-sn-glycero-3-phosphoethanolamine + CoA. It carries out the reaction 1-(9Z-octadecenoyl)-sn-glycero-3-phospho-(1'-sn-glycerol) + (9Z)-octadecenoyl-CoA = 1,2-di-(9Z-octadecenoyl)-sn-glycero-3-phospho-(1'-sn-glycerol) + CoA. Its pathway is lipid metabolism; phospholipid metabolism. Its function is as follows. Acyltransferase with broad-specificity, that mediates the acylation of lysophospholipids to produce phospholipids (glycerophospholipids). Converts lysophosphatidylserine (1-acyl-2-hydroxy-sn-glycero-3-phospho-L-serine or LPS) to phosphatidylserine (1,2-diacyl-sn-glycero-3-phospho-L-serine or PS) (LPSAT activity), lysophosphatidylcholine (1-acyl-sn-glycero-3-phosphocholine or LPC) to phosphatidylcholine (1,2-diacyl-sn-glycero-3-phosphocholine or PC) (LPCAT activity), also lysophosphatidylethanolamine (1-acyl-sn-glycero-3-phosphochethanolamine or LPE) to phosphatidylchethanolamine (LPEAT activity) and lysophosphatidylglycerol (1-acyl-2-hydroxy-sn-glycero-3-phospho-(1'-sn-glycerol) or LPG) to phosphatidylglycerol (1,2-diacyl-sn-glycero-3-phospho-(1'-sn-glycerol) or PG) (LPGAT activity). Has a preference for unsaturated fatty acids of at least 16 carbons such as oleoyl-CoA ((9Z)-octadecenoyl-CoA) and palmitoleoyl-CoA ((9Z)-hexadecenoyl-CoA). Glycerophospholipids are important structural and functional components of cellular membrane, acyl-chain remodeling regulates the molecular species distribution of glycerophospholipids which can affect membrane fluidity and curvature. Essential for fertility and viability together with Nessy protein (Nes). The sequence is that of Lysophospholipid acyltransferase 6 from Drosophila melanogaster (Fruit fly).